The sequence spans 151 residues: MYSGEMTMVILLLIGLVAQSNLIAICASVLLIVQFSKMDFLFPYLETHGLELGLLFLLLSILVPIATDRVTTRDLLYNVSSLPGFLSIVGGILATHLNSEGLKLMQIDPSIIFGLIVGSVIGIIFFNGQPVGPLMAAGVAALFIEVLNWFH.

Helical transmembrane passes span 9–29, 47–67, 75–95, and 111–131; these read VILL…CASV, THGL…PIAT, LLYN…ILAT, and IIFG…GQPV.

This sequence belongs to the UPF0756 family.

Its subcellular location is the cell membrane. This is UPF0756 membrane protein Dred_1676 from Desulforamulus reducens (strain ATCC BAA-1160 / DSM 100696 / MI-1) (Desulfotomaculum reducens).